Consider the following 120-residue polypeptide: Fumarate reductase subunit D (120 aa).

3 helical membrane passes run phenylalanine 25–leucine 45, glycine 57–tryptophan 77, and isoleucine 100–isoleucine 120.

The protein belongs to the FrdD family. As to quaternary structure, part of an enzyme complex containing four subunits: a flavoprotein (FrdA), an iron-sulfur protein (FrdB), and two hydrophobic anchor proteins (FrdC and FrdD).

It is found in the cell inner membrane. Anchors the catalytic components of the fumarate reductase complex to the cell membrane, binds quinones. The protein is Fumarate reductase subunit D of Photobacterium profundum (strain SS9).